A 102-amino-acid chain; its full sequence is Thioredoxin (102 aa).

The Thioredoxin domain occupies 2–102; the sequence is VTEIRSLKQL…KTKIIDLFNN (101 aa). Cysteine 30 and cysteine 33 are oxidised to a cystine.

The protein belongs to the thioredoxin family.

In terms of biological role, participates in various redox reactions through the reversible oxidation of its active center dithiol to a disulfide and catalyzes dithiol-disulfide exchange reactions. The polypeptide is Thioredoxin (trxA) (Mycoplasma genitalium (strain ATCC 33530 / DSM 19775 / NCTC 10195 / G37) (Mycoplasmoides genitalium)).